A 281-amino-acid chain; its full sequence is Ribulose-5-phosphate-3-epimerase, chloroplastic (281 aa).

The transit peptide at 1-45 (MSTSAASLCCSSTQVNGFGLRPERSLLYQPTSFSFSRRRTHGIVK) directs the protein to the chloroplast. Position 63 (serine 63) interacts with substrate. 3 residues coordinate a divalent metal cation: histidine 88, aspartate 90, and histidine 121. The active-site Proton acceptor is the aspartate 90. Substrate-binding positions include histidine 121, 199–202 (GFGG), 232–234 (DGG), and 254–256 (GSA). Aspartate 232 is an a divalent metal cation binding site. Catalysis depends on aspartate 232, which acts as the Proton donor.

This sequence belongs to the ribulose-phosphate 3-epimerase family. As to quaternary structure, homooctamer. It depends on Co(2+) as a cofactor. Fe(2+) is required as a cofactor. The cofactor is Mn(2+). Requires Zn(2+) as cofactor. As to expression, present in roots, seeds and flowers. Accumulates in nematode feeding sites (NFS).

The protein localises to the plastid. It is found in the chloroplast thylakoid membrane. The catalysed reaction is D-ribulose 5-phosphate = D-xylulose 5-phosphate. It participates in carbohydrate biosynthesis; Calvin cycle. Essential protein required during embryogenesis. Catalyzes the reversible epimerization of D-ribulose 5-phosphate to D-xylulose 5-phosphate. Essential for the early steps of nematode feeding sites (NFS, multinucleated root cells) formation induced by the root-knot nematodes Heterodera schachtii, Meloidogyne incognita, M.javanica and M.hapla. In Arabidopsis thaliana (Mouse-ear cress), this protein is Ribulose-5-phosphate-3-epimerase, chloroplastic.